A 395-amino-acid polypeptide reads, in one-letter code: Elongation factor Tu (395 aa).

In terms of domain architecture, tr-type G spans 10–204 (KPHCNIGTIG…TVDSYIPDPQ (195 aa)). The G1 stretch occupies residues 19–26 (GHVDHGKT). Position 19–26 (19–26 (GHVDHGKT)) interacts with GTP. Position 26 (Thr-26) interacts with Mg(2+). The interval 61 to 65 (GITIS) is G2. The interval 82-85 (DCPG) is G3. GTP-binding positions include 82-86 (DCPGH) and 137-140 (NKCD). A G4 region spans residues 137–140 (NKCD). Residues 173–175 (SAL) form a G5 region.

The protein belongs to the TRAFAC class translation factor GTPase superfamily. Classic translation factor GTPase family. EF-Tu/EF-1A subfamily. As to quaternary structure, monomer.

The protein resides in the cytoplasm. It carries out the reaction GTP + H2O = GDP + phosphate + H(+). Functionally, GTP hydrolase that promotes the GTP-dependent binding of aminoacyl-tRNA to the A-site of ribosomes during protein biosynthesis. In Agathobacter rectalis (strain ATCC 33656 / DSM 3377 / JCM 17463 / KCTC 5835 / VPI 0990) (Eubacterium rectale), this protein is Elongation factor Tu.